The primary structure comprises 169 residues: Lipoprotein signal peptidase (169 aa).

4 helical membrane passes run 10 to 30, 41 to 61, 68 to 88, and 94 to 114; these read LPWLWITVLVFVLDQVSKAFF, VVIPDLFSWTLAYNTGAAFSF, WQRWLFALIAIVVSAILVVWL, and GETWLAVALALVLGGALGNLY. Active-site residues include D124 and D143. The chain crosses the membrane as a helical span at residues 135 to 155; the sequence is YFPAFNLADSAITVGAVMLAL.

It belongs to the peptidase A8 family.

Its subcellular location is the cell inner membrane. It carries out the reaction Release of signal peptides from bacterial membrane prolipoproteins. Hydrolyzes -Xaa-Yaa-Zaa-|-(S,diacylglyceryl)Cys-, in which Xaa is hydrophobic (preferably Leu), and Yaa (Ala or Ser) and Zaa (Gly or Ala) have small, neutral side chains.. The protein operates within protein modification; lipoprotein biosynthesis (signal peptide cleavage). Functionally, this protein specifically catalyzes the removal of signal peptides from prolipoproteins. The sequence is that of Lipoprotein signal peptidase from Pseudomonas paraeruginosa (strain DSM 24068 / PA7) (Pseudomonas aeruginosa (strain PA7)).